A 258-amino-acid chain; its full sequence is Trans-aconitate 2-methyltransferase (258 aa).

It belongs to the methyltransferase superfamily. Tam family.

Its subcellular location is the cytoplasm. It catalyses the reaction trans-aconitate + S-adenosyl-L-methionine = (E)-3-(methoxycarbonyl)pent-2-enedioate + S-adenosyl-L-homocysteine. Its function is as follows. Catalyzes the S-adenosylmethionine monomethyl esterification of trans-aconitate. The chain is Trans-aconitate 2-methyltransferase from Yersinia pseudotuberculosis serotype O:1b (strain IP 31758).